The primary structure comprises 49 residues: Osteocalcin (49 aa).

Residues 1–47 (YLDSGLGAPVPYPDPLEPKREVCELNPNCDELADHIGFQEAYQRFYG) enclose the Gla domain. Residues E17, E21, E24, and D30 each contribute to the Ca(2+) site. 4-carboxyglutamate is present on residues E17, E21, and E24. An intrachain disulfide couples C23 to C29.

This sequence belongs to the osteocalcin/matrix Gla protein family. Post-translationally, gamma-carboxyglutamate residues are formed by vitamin K dependent carboxylation by GGCX. These residues are essential for the binding of calcium. Decarboxylation promotes the hormone activity.

It is found in the secreted. The carboxylated form is one of the main organic components of the bone matrix, which constitutes 1-2% of the total bone protein. It acts as a negative regulator of bone formation and is required to limit bone formation without impairing bone resorption or mineralization. The carboxylated form binds strongly to apatite and calcium. Its function is as follows. The uncarboxylated form acts as a hormone secreted by osteoblasts, which regulates different cellular processes, such as energy metabolism, male fertility and brain development. Regulates of energy metabolism by acting as a hormone favoring pancreatic beta-cell proliferation, insulin secretion and sensitivity and energy expenditure. Uncarboxylated osteocalcin hormone also promotes testosterone production in the testes: acts as a ligand for G protein-coupled receptor GPRC6A at the surface of Leydig cells, initiating a signaling response that promotes the expression of enzymes required for testosterone synthesis in a CREB-dependent manner. Also acts as a regulator of brain development: osteocalcin hormone crosses the blood-brain barrier and acts as a ligand for GPR158 on neurons, initiating a signaling response that prevents neuronal apoptosis in the hippocampus, favors the synthesis of all monoamine neurotransmitters and inhibits that of gamma-aminobutyric acid (GABA). Osteocalcin also crosses the placenta during pregnancy and maternal osteocalcin is required for fetal brain development. In Canis lupus familiaris (Dog), this protein is Osteocalcin (BGLAP).